A 509-amino-acid chain; its full sequence is Coiled-coil domain-containing protein 181 (509 aa).

Disordered stretches follow at residues 1–122 and 237–369; these read MDED…EDEE and FLPP…EKKK. Composition is skewed to basic and acidic residues over residues 22 to 33 and 41 to 56; these read DLEWLINDKEKS and ACKK…KENE. Residues 60-69 are compositionally biased toward polar residues; that stretch reads ELGQQLSDPD. 2 stretches are compositionally biased toward basic and acidic residues: residues 70-82 and 266-275; these read NSPK…RRND and IKKEESEAKG. Residues 319–333 are compositionally biased toward polar residues; sequence RIQSAGVSPVTSTYC. 2 coiled-coil regions span residues 335 to 377 and 418 to 488; these read SPRQ…VFKA and LKKK…RSKQ. Positions 337 to 369 are enriched in basic and acidic residues; sequence RQKELQKQLERKREKLKREEEQRKLEEENEKKK.

Belongs to the CCDC181 family. Homodimer. Interacts with HOOK1. Interacts with HOOK2. Interacts with HOOK3. Predominantly expressed in testis. Expressed at lower level in brain, eye, trachea and lung. Barely expressed in tongue, heart, liver, kidney, spleen and muscle. Present at high level in elongating spermatids, whereas lower levels are observed in round spermatids (at protein level).

The protein localises to the cytoplasm. It is found in the cytoskeleton. Its subcellular location is the cell projection. It localises to the cilium. The protein resides in the flagellum. Microtubule-binding protein that localizes to the microtubular manchette of elongating spermatids. The protein is Coiled-coil domain-containing protein 181 of Mus musculus (Mouse).